Here is a 352-residue protein sequence, read N- to C-terminus: MNTLLMHCRPGFEGEVCAEIAEHAATLEIPGYAKSKPASAHVEFVCQDADGAERLMRRLRFADLIFPRQWARGPGFIELPESQRIEVLLAELASYPVCGSLWLEVLDTNAGKEVSTFCRKFEKPLRAALVKAGRLQEDPALPRLLLTFRSGREVFVGLAEPRNSALWPMGIPRLKFPREAPSRSTLKLEEAWHQFIPRSEWDKRLAPDMLAVDLGAAPGGWTWQLVNREMRVTAVDNGPMAENLMYSGLVDHQKVDGYQYRPRQRVDWMVCDIVEKPARTGALIETWIGEGLCREAVVNLKLPMKQRYAEVRKILQRLRESFDARGLKVVIGCKQLYHDREEVTCHLRRLER.

S-adenosyl-L-methionine-binding positions include Ser-184, 217–220, Asp-236, Asp-256, and Asp-272; that span reads APGG. Lys-301 functions as the Proton acceptor in the catalytic mechanism.

It belongs to the class I-like SAM-binding methyltransferase superfamily. RNA methyltransferase RlmE family. RlmM subfamily. Monomer.

Its subcellular location is the cytoplasm. It carries out the reaction cytidine(2498) in 23S rRNA + S-adenosyl-L-methionine = 2'-O-methylcytidine(2498) in 23S rRNA + S-adenosyl-L-homocysteine + H(+). In terms of biological role, catalyzes the 2'-O-methylation at nucleotide C2498 in 23S rRNA. The protein is Ribosomal RNA large subunit methyltransferase M of Pseudomonas aeruginosa (strain UCBPP-PA14).